Here is a 638-residue protein sequence, read N- to C-terminus: Growth hormone receptor (638 aa).

The first 18 residues, Met-1 to Ala-18, serve as a signal peptide directing secretion. The Extracellular segment spans residues Phe-19 to Tyr-264. N-linked (GlcNAc...) asparagine glycosylation is present at Asn-46. Intrachain disulfides connect Cys-56–Cys-66 and Cys-101–Cys-112. Asn-115 carries N-linked (GlcNAc...) asparagine glycosylation. The cysteines at positions 126 and 140 are disulfide-linked. The region spanning Pro-151–Met-254 is the Fibronectin type-III domain. Asn-156, Asn-161, and Asn-200 each carry an N-linked (GlcNAc...) asparagine glycan. Positions Tyr-240 to Ser-244 match the WSXWS motif motif. A helical membrane pass occupies residues Phe-265–Ser-288. Topologically, residues Lys-289–Pro-638 are cytoplasmic. The interval Lys-294–Val-379 is required for JAK2 binding. Residues Ile-297–Lys-305 carry the Box 1 motif motif. The UbE motif motif lies at Asp-340–Asp-349. Ser-341 carries the phosphoserine modification. Residues Pro-353 to Ser-388 form a disordered region. Positions Lys-356–Lys-372 are enriched in basic and acidic residues. Phosphotyrosine is present on residues Tyr-487 and Tyr-595.

It belongs to the type I cytokine receptor family. Type 1 subfamily. In terms of assembly, on growth hormone (GH) binding, forms homodimers and binds JAK2 via a box 1-containing domain. Post-translationally, the soluble form (GHBP) is produced by phorbol ester-promoted proteolytic cleavage at the cell surface (shedding) by ADAM17/TACE. Shedding is inhibited by growth hormone (GH) binding to the receptor probably due to a conformational change in GHR rendering the receptor inaccessible to ADAM17. On GH binding, phosphorylated on tyrosine residues in the cytoplasmic domain by JAK2. In terms of processing, ubiquitinated by the ECS(SOCS2) complex following ligand-binding and phosphorylation by JAK2, leading to its degradation by the proteasome. Regulation by the ECS(SOCS2) complex acts as a negative feedback loop of growth hormone receptor signaling. Ubiquitination is not sufficient for GHR internalization.

Its subcellular location is the cell membrane. It localises to the secreted. Functionally, receptor for pituitary gland growth hormone (GH1) involved in regulating postnatal body growth. On ligand binding, couples to the JAK2/STAT5 pathway. The soluble form (GHBP) acts as a reservoir of growth hormone in plasma and may be a modulator/inhibitor of GH signaling. The chain is Growth hormone receptor (GHR) from Macaca mulatta (Rhesus macaque).